The following is a 258-amino-acid chain: Isoprenyl transferase (258 aa).

D38 is an active-site residue. D38 is a Mg(2+) binding site. Residues 39–42, W43, R51, H55, and 83–85 contribute to the substrate site; these read GNGR and STE. The active-site Proton acceptor is N86. Substrate contacts are provided by residues W87, R89, R206, and 212 to 214; that span reads RIS. Residue E225 participates in Mg(2+) binding.

Belongs to the UPP synthase family. Homodimer. The cofactor is Mg(2+).

Catalyzes the condensation of isopentenyl diphosphate (IPP) with allylic pyrophosphates generating different type of terpenoids. The protein is Isoprenyl transferase of Bacillus anthracis.